Reading from the N-terminus, the 144-residue chain is Large ribosomal subunit protein uL13 (144 aa).

It belongs to the universal ribosomal protein uL13 family. In terms of assembly, part of the 50S ribosomal subunit.

Its function is as follows. This protein is one of the early assembly proteins of the 50S ribosomal subunit, although it is not seen to bind rRNA by itself. It is important during the early stages of 50S assembly. This is Large ribosomal subunit protein uL13 from Clostridium tetani (strain Massachusetts / E88).